Consider the following 117-residue polypeptide: Elafin (117 aa).

An N-terminal signal peptide occupies residues Met1 to Ala22. Residues Ala23 to Lys60 constitute a propeptide that is removed on maturation. 2 SVP-1 clotting repeats span residues Val29–Lys54 and Gly55–Lys72. The 2 X tandem repeats of SVP-1 like motif stretch occupies residues Val29–Lys72. The region spanning Val69–Gln117 is the WAP domain. 4 cysteine pairs are disulfide-bonded: Cys76–Cys105, Cys83–Cys109, Cys92–Cys104, and Cys98–Cys113.

It localises to the secreted. Neutrophil and pancreatic elastase-specific inhibitor of skin. It may prevent elastase-mediated tissue proteolysis. Has been shown to inhibit the alpha-4-beta-2/CHRNA2-CHRNB2 nicotinic acetylcholine receptor and to produce a weak inhibition on Kv11.1/KCNH2/ERG1 and on the transient receptor potential cation channel subfamily V member 1 (TRPV1). This is Elafin (PI3) from Homo sapiens (Human).